The sequence spans 156 residues: Cyanate hydratase (156 aa).

Residues arginine 96, glutamate 99, and serine 122 contribute to the active site.

The protein belongs to the cyanase family.

It carries out the reaction cyanate + hydrogencarbonate + 3 H(+) = NH4(+) + 2 CO2. Catalyzes the reaction of cyanate with bicarbonate to produce ammonia and carbon dioxide. The chain is Cyanate hydratase from Pseudomonas fluorescens (strain ATCC BAA-477 / NRRL B-23932 / Pf-5).